Consider the following 483-residue polypeptide: ATP synthase subunit beta (483 aa).

168–175 is an ATP binding site; that stretch reads GGAGVGKT.

This sequence belongs to the ATPase alpha/beta chains family. As to quaternary structure, F-type ATPases have 2 components, CF(1) - the catalytic core - and CF(0) - the membrane proton channel. CF(1) has five subunits: alpha(3), beta(3), gamma(1), delta(1), epsilon(1). CF(0) has three main subunits: a(1), b(2) and c(9-12). The alpha and beta chains form an alternating ring which encloses part of the gamma chain. CF(1) is attached to CF(0) by a central stalk formed by the gamma and epsilon chains, while a peripheral stalk is formed by the delta and b chains.

It localises to the cell membrane. It catalyses the reaction ATP + H2O + 4 H(+)(in) = ADP + phosphate + 5 H(+)(out). Its function is as follows. Produces ATP from ADP in the presence of a proton gradient across the membrane. The catalytic sites are hosted primarily by the beta subunits. This chain is ATP synthase subunit beta, found in Mycobacterium ulcerans (strain Agy99).